Here is a 1291-residue protein sequence, read N- to C-terminus: Capping protein-inhibiting regulator of actin dynamics (1291 aa).

A phosphoserine mark is found at Ser-7 and Ser-28. Disordered regions lie at residues 48–71 (KFGQRPSNAIPMKKAGSTDASSEE), 84–137 (QQDI…AGTI), 159–221 (HKLA…HEEK), 234–253 (KCKRQKAEAAEKRRQEEQRR), 267–663 (QELL…ASHA), and 701–1238 (LGLS…TSVT). A Phosphoserine modification is found at Ser-132. Over residues 159 to 176 (HKLAVKPKNQRVSRKHRW) the composition is skewed to basic residues. Over residues 184–199 (EPGSFESQSSLDQNGQ) the composition is skewed to polar residues. A compositionally biased stretch (basic and acidic residues) spans 201-221 (GEDKHIWHGEEPEPLESHEEK). Positions 270 to 291 (LEEEEEGEEEEEVKEEGEEGEE) are enriched in acidic residues. Basic and acidic residues-rich tracts occupy residues 302–318 (PPEEGHQSGPEEQRCTE), 326–461 (DPAR…EDAK), and 470–483 (EAKRIEELKGKETP). Residues 324–560 (ADDPARLEAE…DLDAHCGGVD (237 aa)) are required for interaction with actin-capping proteins. Thr-482 is subject to Phosphothreonine. Ser-493 and Ser-510 each carry phosphoserine. Basic and acidic residues-rich tracts occupy residues 506–527 (ADQRSPLQRDLEKPGEREREDL) and 534–543 (EIAEEPRGEG). Residues 580–593 (EGTPAPEENEATAA) are compositionally biased toward low complexity. Residues 594–612 (DIDRKVEELRWQEVDERQT) are compositionally biased toward basic and acidic residues. Ser-636 carries the post-translational modification Phosphoserine. Thr-639 bears the Phosphothreonine mark. Positions 749 to 778 (KNSEGDQRGDREPARAGDEPVPRARCDSRG) are enriched in basic and acidic residues. Phosphoserine is present on Ser-867. The span at 875-888 (TESTTTLDSETTSD) shows a compositional bias: low complexity. A compositionally biased stretch (basic and acidic residues) spans 969-983 (QERKPALSPRKDSAE). At Thr-1033 the chain carries Phosphothreonine. Phosphoserine is present on Ser-1037. The span at 1056-1070 (GKLDSEPSETAKESS) shows a compositional bias: basic and acidic residues. Ser-1076 carries the post-translational modification Phosphoserine. Composition is skewed to basic and acidic residues over residues 1081-1098 (EELKGQKRDEKDVPEKKP), 1117-1141 (TGRKEKPVLQSRHSLDGSKVTEKVE), and 1157-1182 (GFREQQATREERKQAREAKQAEKLSK). 2 stretches are compositionally biased toward polar residues: residues 1183 to 1197 (ETVSVSLQPGSSRAS) and 1229 to 1238 (KSNTLPTSVT).

In terms of assembly, directly interacts with actin-capping proteins CAPZA1, CAPZA2 and CAPZB; this interaction decreases the binding of capping proteins to actin. In terms of tissue distribution, expressed in the small intestine (at protein level).

It is found in the cytoplasm. The protein resides in the cytosol. Involved in epithelial cell integrity by acting on the dynamics of the actin cytoskeleton. Positively regulates the actin polymerization, by inhibiting the interaction of actin-capping proteins with actin. This chain is Capping protein-inhibiting regulator of actin dynamics, found in Mus musculus (Mouse).